Reading from the N-terminus, the 338-residue chain is Heat-inducible transcription repressor HrcA (338 aa).

It belongs to the HrcA family.

Functionally, negative regulator of class I heat shock genes (grpE-dnaK-dnaJ and groELS operons). Prevents heat-shock induction of these operons. This is Heat-inducible transcription repressor HrcA from Thermotoga petrophila (strain ATCC BAA-488 / DSM 13995 / JCM 10881 / RKU-1).